The primary structure comprises 298 residues: Transcription factor SRM1 (298 aa).

The SANT domain occupies 7-62 (SDGSVWSREDDIAFERALANNTDESEERWEKIAADVPGKSVEQIKEHYELLVEDVT). The interval 68–118 (CVPLPAYGSPEGSNGHAGDEGASSKKGGNSHAGESNQAGKSKSDQERRKGI) is disordered. Residues 108–118 (SKSDQERRKGI) are compositionally biased toward basic and acidic residues. One can recognise an HTH myb-type domain in the interval 111 to 168 (DQERRKGIAWTEDEHRLFLLGLDKYGKGDWRSISRNFVVTRTPTQVASHAQKYFIRLN). The segment at residues 140–164 (WRSISRNFVVTRTPTQVASHAQKYF) is a DNA-binding region (H-T-H motif). Polar residues predominate over residues 182 to 200 (ITSVGNADVSTPQGPITGQ). Positions 182–245 (ITSVGNADVS…GPPMYGTPAI (64 aa)) are disordered. The segment covering 201–215 (NNSNNNNNNNNNNSS) has biased composition (low complexity).

In terms of tissue distribution, expressed in young seedlings, developing leaves, sepals and trichomes.

It is found in the nucleus. Its function is as follows. Transcription activator that coordinates abscisic acid (ABA) biosynthesis and signaling-related genes via binding to the specific promoter motif 5'-(A/T)AACCAT-3'. Represses ABA-mediated salt (e.g. NaCl and KCl) stress tolerance. Regulates leaf shape and promotes vegetative growth. This is Transcription factor SRM1 from Arabidopsis thaliana (Mouse-ear cress).